Here is a 503-residue protein sequence, read N- to C-terminus: ATP synthase subunit alpha (503 aa).

169–176 serves as a coordination point for ATP; sequence GDRGTGKT.

The protein belongs to the ATPase alpha/beta chains family. F-type ATPases have 2 components, CF(1) - the catalytic core - and CF(0) - the membrane proton channel. CF(1) has five subunits: alpha(3), beta(3), gamma(1), delta(1), epsilon(1). CF(0) has three main subunits: a(1), b(2) and c(9-12). The alpha and beta chains form an alternating ring which encloses part of the gamma chain. CF(1) is attached to CF(0) by a central stalk formed by the gamma and epsilon chains, while a peripheral stalk is formed by the delta and b chains.

It is found in the cell inner membrane. It catalyses the reaction ATP + H2O + 4 H(+)(in) = ADP + phosphate + 5 H(+)(out). Produces ATP from ADP in the presence of a proton gradient across the membrane. The alpha chain is a regulatory subunit. This chain is ATP synthase subunit alpha, found in Leptospira borgpetersenii serovar Hardjo-bovis (strain L550).